Here is a 385-residue protein sequence, read N- to C-terminus: Chorismate synthase (385 aa).

Residues Arg-40 and Arg-46 each coordinate NADP(+). FMN is bound by residues 128-130 (RAS), 248-249 (QA), Gly-293, 308-312 (KAIPS), and Arg-334.

The protein belongs to the chorismate synthase family. Homotetramer. FMNH2 is required as a cofactor.

It carries out the reaction 5-O-(1-carboxyvinyl)-3-phosphoshikimate = chorismate + phosphate. It participates in metabolic intermediate biosynthesis; chorismate biosynthesis; chorismate from D-erythrose 4-phosphate and phosphoenolpyruvate: step 7/7. In terms of biological role, catalyzes the anti-1,4-elimination of the C-3 phosphate and the C-6 proR hydrogen from 5-enolpyruvylshikimate-3-phosphate (EPSP) to yield chorismate, which is the branch point compound that serves as the starting substrate for the three terminal pathways of aromatic amino acid biosynthesis. This reaction introduces a second double bond into the aromatic ring system. The polypeptide is Chorismate synthase (Endomicrobium trichonymphae).